Here is an 887-residue protein sequence, read N- to C-terminus: Phosphatidylinositol 3-kinase catalytic subunit type 3 (887 aa).

Positions Y35–Q184 constitute a C2 PI3K-type domain. The tract at residues V149–D170 is disordered. The segment covering P156–D170 has biased composition (polar residues). T163 bears the Phosphothreonine; by AMPK mark. Position 165 is a phosphoserine; by AMPK (S165). S244, S261, and S282 each carry phosphoserine. In terms of domain architecture, PIK helical spans D283–V520. Positions T447–D467 are disordered. Residues I605 to F871 enclose the PI3K/PI4K catalytic domain. A G-loop region spans residues L611–M617. Residues G740–N748 are catalytic loop. Positions H759–N780 are activation loop.

The protein belongs to the PI3/PI4-kinase family. As to quaternary structure, component of the PI3K (PI3KC3/PI3K-III/class III phosphatidylinositol 3-kinase) complex the core of which is composed of the catalytic subunit PIK3C3, the regulatory subunit PIK3R4 and BECN1 associating with additional regulatory/auxiliary subunits to form alternative complex forms. Alternative complex forms containing a fourth regulatory subunit in a mutually exclusive manner are: the PI3K complex I (PI3KC3-C1) containing ATG14, and the PI3K complex II (PI3KC3-C2) containing UVRAG. PI3KC3-C1 displays a V-shaped architecture with PIK3R4 serving as a bridge between PIK3C3 and the ATG14:BECN1 subcomplex. Both, PI3KC3-C1 and PI3KC3-C2, can associate with further regulatory subunits such as RUBCN, SH3GLB1/Bif-1 and AMBRA1. PI3KC3-C1 probably associates with PIK3CB. Interacts with RAB7A in the presence of PIK3R4. Interacts with AMBRA1. Interacts with BECN1P1/BECN2. Interacts with SLAMF1. May be a component of a complex composed of RAB5A (in GDP-bound form), DYN2 and PIK3C3. Interacts with NCKAP1L. Interacts with ATG14; this interaction is increased in the absence of TMEM39A. Interacts with STEEP1; the interaction is STING1-dependent and required for trafficking of STING1 from the endoplasmic reticulum. Interacts with YWHAG. Interacts with ARMC3. Requires Mn(2+) as cofactor. Ubiquitinated via 'Lys-29'- and 'Lys-48'-linked ubiquitination by UBE3C, promoting its degradation. Deubiquitination by ZRANB1/TRABID promotes its stabilization, leading to autophagosome maturation. In terms of tissue distribution, ubiquitously expressed, with a highest expression in skeletal muscle.

The protein resides in the midbody. The protein localises to the late endosome. It localises to the cytoplasmic vesicle. It is found in the autophagosome. It carries out the reaction a 1,2-diacyl-sn-glycero-3-phospho-(1D-myo-inositol) + ATP = a 1,2-diacyl-sn-glycero-3-phospho-(1D-myo-inositol-3-phosphate) + ADP + H(+). Functionally, catalytic subunit of the PI3K complex that mediates formation of phosphatidylinositol 3-phosphate; different complex forms are believed to play a role in multiple membrane trafficking pathways: PI3KC3-C1 is involved in initiation of autophagosomes and PI3KC3-C2 in maturation of autophagosomes and endocytosis. As part of PI3KC3-C1, promotes endoplasmic reticulum membrane curvature formation prior to vesicle budding. Involved in regulation of degradative endocytic trafficking and required for the abscission step in cytokinesis, probably in the context of PI3KC3-C2. Involved in the transport of lysosomal enzyme precursors to lysosomes. Required for transport from early to late endosomes. (Microbial infection) Kinase activity is required for SARS coronavirus-2/SARS-CoV-2 replication. This is Phosphatidylinositol 3-kinase catalytic subunit type 3 from Homo sapiens (Human).